The following is a 500-amino-acid chain: Probable cytosol aminopeptidase (500 aa).

Residues K264 and D269 each contribute to the Mn(2+) site. K276 is a catalytic residue. 3 residues coordinate Mn(2+): D287, D346, and E348. R350 is an active-site residue.

This sequence belongs to the peptidase M17 family. It depends on Mn(2+) as a cofactor.

Its subcellular location is the cytoplasm. The catalysed reaction is Release of an N-terminal amino acid, Xaa-|-Yaa-, in which Xaa is preferably Leu, but may be other amino acids including Pro although not Arg or Lys, and Yaa may be Pro. Amino acid amides and methyl esters are also readily hydrolyzed, but rates on arylamides are exceedingly low.. It catalyses the reaction Release of an N-terminal amino acid, preferentially leucine, but not glutamic or aspartic acids.. Its function is as follows. Presumably involved in the processing and regular turnover of intracellular proteins. Catalyzes the removal of unsubstituted N-terminal amino acids from various peptides. In Afipia carboxidovorans (strain ATCC 49405 / DSM 1227 / KCTC 32145 / OM5) (Oligotropha carboxidovorans), this protein is Probable cytosol aminopeptidase.